Here is a 1262-residue protein sequence, read N- to C-terminus: ATP-dependent helicase/nuclease subunit A (1262 aa).

The UvrD-like helicase ATP-binding domain maps to 5–476 (FSFTPSQDQA…IVLAENFRSM (472 aa)). ATP is bound at residue 26–33 (ASAGSGKT). Residues 515-808 (DTVTSTAELL…SVMTIHGSKG (294 aa)) enclose the UvrD-like helicase C-terminal domain.

This sequence belongs to the helicase family. AddA subfamily. As to quaternary structure, heterodimer of AddA and AddB/RexB. The cofactor is Mg(2+).

The enzyme catalyses Couples ATP hydrolysis with the unwinding of duplex DNA by translocating in the 3'-5' direction.. The catalysed reaction is ATP + H2O = ADP + phosphate + H(+). Functionally, the heterodimer acts as both an ATP-dependent DNA helicase and an ATP-dependent, dual-direction single-stranded exonuclease. Recognizes the chi site generating a DNA molecule suitable for the initiation of homologous recombination. The AddA nuclease domain is required for chi fragment generation; this subunit has the helicase and 3' -&gt; 5' nuclease activities. The protein is ATP-dependent helicase/nuclease subunit A of Levilactobacillus brevis (strain ATCC 367 / BCRC 12310 / CIP 105137 / JCM 1170 / LMG 11437 / NCIMB 947 / NCTC 947) (Lactobacillus brevis).